Consider the following 972-residue polypeptide: Hyaluronan synthase (972 aa).

Residues 152-325 (KPEHQHVGLS…VSLDWRLEQF (174 aa)) form an A1 region. The segment at 432-604 (EDSHINRVPL…IRAWHLTDGF (173 aa)) is A2.

Belongs to the glycosyltransferase 2 family. CS/HAS subfamily. Mg(2+) is required as a cofactor. The cofactor is Co(2+).

It is found in the cell membrane. It catalyses the reaction [hyaluronan](n) + UDP-N-acetyl-alpha-D-glucosamine = N-acetyl-beta-D-glucosaminyl-(1-&gt;4)-[hyaluronan](n) + UDP + H(+). It carries out the reaction N-acetyl-beta-D-glucosaminyl-(1-&gt;4)-[hyaluronan](n) + UDP-alpha-D-glucuronate = [hyaluronan](n+1) + UDP + H(+). The enzyme catalyses 3-O-(beta-D-GalNAc-(1-&gt;4)-beta-D-GlcA-(1-&gt;3)-beta-D-Gal-(1-&gt;3)-beta-D-Gal-(1-&gt;4)-beta-D-Xyl)-L-seryl-[protein] + UDP-alpha-D-glucuronate = 3-O-(beta-D-GlcA-(1-&gt;3)-beta-D-GalNAc-(1-&gt;4)-beta-D-GlcA-(1-&gt;3)-beta-D-Gal-(1-&gt;3)-beta-D-Gal-(1-&gt;4)-beta-D-Xyl)-L-seryl-[protein] + UDP + H(+). The catalysed reaction is 3-O-{[beta-D-GalNAc-(1-&gt;4)-beta-D-GlcA-(1-&gt;3)](n)-beta-D-GalNAc-(1-&gt;4)-beta-D-GlcA-(1-&gt;3)-beta-D-Gal-(1-&gt;3)-beta-D-Gal-(1-&gt;4)-beta-D-Xyl}-L-seryl-[protein] + UDP-alpha-D-glucuronate = 3-O-{beta-D-GlcA-(1-&gt;3)-[beta-D-GalNAc-(1-&gt;4)-beta-D-GlcA-(1-&gt;3)](n)-beta-D-GalNAc-(1-&gt;4)-beta-D-GlcA-(1-&gt;3)-beta-D-Gal-(1-&gt;3)-beta-D-Gal-(1-&gt;4)-beta-D-Xyl}-L-seryl-[protein] + UDP + H(+). In terms of biological role, catalyzes the polymerization of hyaluronan, a polysaccharide composed of a repeating disaccharide of N-acetylglucosamine (GlcNAc) and glucuronic acid (GlcUA) units. Each unit has the composition in beta-(1-&gt;4)-GlcUA-beta-(1-&gt;3)-GlcNAc. This is Hyaluronan synthase (hyaD) from Pasteurella multocida.